Reading from the N-terminus, the 192-residue chain is Erythropoietin (192 aa).

Positions 1–27 are cleaved as a signal peptide; sequence MGVHECPAWLWLLLSLVSLPLGLPVPG. Cystine bridges form between Cys34–Cys187 and Cys56–Cys60. A glycan (N-linked (GlcNAc...) asparagine) is linked at Asn51. Residues Asn65 and Asn110 are each glycosylated (N-linked (GlcNAc...) asparagine). Ser152 carries O-linked (GalNAc...) serine glycosylation.

This sequence belongs to the EPO/TPO family. In terms of tissue distribution, produced by kidney or liver of adult mammals and by liver of fetal or neonatal mammals.

Its subcellular location is the secreted. In terms of biological role, hormone involved in the regulation of erythrocyte proliferation and differentiation and the maintenance of a physiological level of circulating erythrocyte mass. Binds to EPOR leading to EPOR dimerization and JAK2 activation thereby activating specific downstream effectors, including STAT1 and STAT3. This chain is Erythropoietin (EPO), found in Macaca fascicularis (Crab-eating macaque).